An 868-amino-acid chain; its full sequence is Hopanoid transporter HpnN (868 aa).

The next 12 helical transmembrane spans lie at 16–36 (FAAF…FYTY), 273–293 (GAVV…WMAL), 298–318 (IIFA…AVGL), 326–346 (LLSI…GIQF), 370–390 (YSAV…LSFL), 403–423 (IAGA…PALL), 452–472 (IAII…LYFM), 710–730 (IVAS…ILLW), 740–760 (ALTL…CVLI), 762–782 (LPLN…GVAF), 805–825 (AIFF…LSSH), and 834–854 (LLAL…PALM). Residues 299–425 (IFAVAANLVI…ITVLPALLKL (127 aa)) enclose the SSD domain.

This sequence belongs to the resistance-nodulation-cell division (RND) (TC 2.A.6) family. MmpL subfamily.

The protein localises to the cell inner membrane. Its function is as follows. Essential for hopanoid transport from the cytoplasmic to the outer membrane. Required for the C(35) hopanoid, bacteriohopanetetrol, to remain localized to the mother cell type. This Rhodopseudomonas palustris (strain TIE-1) protein is Hopanoid transporter HpnN.